Reading from the N-terminus, the 49-residue chain is Large ribosomal subunit protein bL33 (49 aa).

Belongs to the bacterial ribosomal protein bL33 family.

The sequence is that of Large ribosomal subunit protein bL33 from Moorella thermoacetica (strain ATCC 39073 / JCM 9320).